A 992-amino-acid polypeptide reads, in one-letter code: P3N-PIPO polyprotein (992 aa).

Residues 168–308 enclose the Peptidase S30 domain; that stretch reads TSQCRKPTYV…VENMEDIQHY (141 aa). Catalysis depends on for P1 proteinase activity residues His-221, Glu-230, and Ser-262. Positions 361–364 match the Involved in interaction with stylet and aphid transmission motif; the sequence is KLSC. The Involved in virions binding and aphid transmission signature appears at 617 to 619; it reads PTK. Residues 643-765 form the Peptidase C6 domain; that stretch reads MYIAKEGFCY…QSEMKFYRVG (123 aa). Catalysis depends on for helper component proteinase activity residues Cys-651 and His-724.

This sequence belongs to the potyviridae P3N-PIPO polyprotein family. Interacts (via PIPO domain) with host PCaP1 protein; this interaction may help to anchor the movement complex to the plasma membrane from which the complex could move to the plasmodesmata. Post-translationally, potyviral RNA is expressed as two polyproteins which undergo post-translational proteolytic processing. Genome polyprotein is processed by NIa-pro, P1 and HC-pro proteinases resulting in the production of at least ten individual proteins. P3N-PIPO is cleaved by P1 and HC-pro proteinases resulting in the production of three individual proteins. The P1 proteinase and the HC-pro cleave only their respective C-termini autocatalytically.

The protein localises to the host cell junction. Its subcellular location is the host plasmodesma. It carries out the reaction Hydrolyzes a Gly-|-Gly bond at its own C-terminus, commonly in the sequence -Tyr-Xaa-Val-Gly-|-Gly, in the processing of the potyviral polyprotein.. Required for aphid transmission and also has proteolytic activity. Only cleaves a Gly-Gly dipeptide at its own C-terminus. Interacts with virions and aphid stylets. Acts as a suppressor of RNA-mediated gene silencing, also known as post-transcriptional gene silencing (PTGS), a mechanism of plant viral defense that limits the accumulation of viral RNAs. May have RNA-binding activity. In terms of biological role, allows efficient cell to cell propagation, by bypassing the host cell wall barrier. Transports viral genome to neighboring plant cells directly through plasmosdesmata, without any budding. The polypeptide is P3N-PIPO polyprotein (Glycine max (Soybean)).